The following is a 601-amino-acid chain: Sulfite reductase [NADPH] flavoprotein alpha-component (601 aa).

A Flavodoxin-like domain is found at 65-203 (ITIISASQTG…NYNKWSQDLL (139 aa)). FMN-binding positions include 71-76 (SQTGNA), 118-121 (STQG), and 154-163 (LGDTSYNLFC). The region spanning 236–450 (KNPAEGIILT…IQTNDNFRLP (215 aa)) is the FAD-binding FR-type domain. FAD is bound by residues threonine 324, isoleucine 358, 388-391 (RLYS), 406-408 (TVG), and 421-424 (GGAS). Residues 521–522 (SQ), 527–531 (KIYVQ), and aspartate 563 each bind NADP(+). Position 601 (tyrosine 601) interacts with FAD.

Belongs to the NADPH-dependent sulphite reductase flavoprotein subunit CysJ family. This sequence in the N-terminal section; belongs to the flavodoxin family. The protein in the C-terminal section; belongs to the flavoprotein pyridine nucleotide cytochrome reductase family. As to quaternary structure, alpha(8)-beta(8). The alpha component is a flavoprotein, the beta component is a hemoprotein. The cofactor is FAD. FMN is required as a cofactor.

It carries out the reaction hydrogen sulfide + 3 NADP(+) + 3 H2O = sulfite + 3 NADPH + 4 H(+). It participates in sulfur metabolism; hydrogen sulfide biosynthesis; hydrogen sulfide from sulfite (NADPH route): step 1/1. Component of the sulfite reductase complex that catalyzes the 6-electron reduction of sulfite to sulfide. This is one of several activities required for the biosynthesis of L-cysteine from sulfate. The flavoprotein component catalyzes the electron flow from NADPH -&gt; FAD -&gt; FMN to the hemoprotein component. This chain is Sulfite reductase [NADPH] flavoprotein alpha-component, found in Buchnera aphidicola subsp. Acyrthosiphon pisum (strain APS) (Acyrthosiphon pisum symbiotic bacterium).